We begin with the raw amino-acid sequence, 405 residues long: DNA polymerase processivity factor (405 aa).

Residues 354–376 (GAGVKRRASEEEESDQPPKKLFP) are disordered. The Bipartite nuclear localization signal motif lies at 358-373 (KRRASEEEESDQPPKK).

Belongs to the herpesviridae DNA polymerase processivity factor family. In terms of assembly, interacts with the DNA polymerase catalytic subunit. Interacts with the origin-binding protein.

It is found in the host nucleus. Its function is as follows. Plays an essential role in viral DNA replication by acting as the polymerase accessory subunit. Associates with the viral polymerase to increase its processivity and forms high-affinity direct interactions with DNA. Facilitates the origin-binding protein loading onto DNA thus increasing its ability to assemble into a functional complex capable of unwinding duplex DNA. The sequence is that of DNA polymerase processivity factor from Equine herpesvirus 1 (strain Ab4p) (EHV-1).